The chain runs to 172 residues: Spermidine/spermine N(1)-acetyltransferase (172 aa).

The N-acetyltransferase domain maps to Val3–Ile172. Acetyl-CoA contacts are provided by residues Ile96–Ile98, His105–Lys109, and Asn135–Asn137. Residue Tyr142 is the Proton donor of the active site. Lys144 contacts acetyl-CoA.

Belongs to the acetyltransferase family. As to quaternary structure, monomer.

It catalyses the reaction an alkane-alpha,omega-diamine + acetyl-CoA = an N-acetylalkane-alpha,omega-diamine + CoA + H(+). Its function is as follows. Involved in the protection against polyamine toxicity by regulating their concentration. Could also be involved in the negative control of sporulation as well as production of degradative enzymes such as alpha-amylase, levansucrase and alkaline phosphatase. Catalyzes the transfer of an acetyl group from acetyl coenzyme A (AcCoA) to an acceptor substrate and releases both CoA and the acetylated product. It possesses N1-acetyltransferase activity toward polyamine substrates including spermidine, spermine, aminopropylcadaverine, norspermidine, homospermidine, N(8)-acetylspermidine, diaminopropane and agmatine. This Bacillus subtilis (strain 168) protein is Spermidine/spermine N(1)-acetyltransferase.